The sequence spans 82 residues: MKLTCVMIVAVLFLIAWTFVTADDSRNGLKNLFPKARHEMKNPEASKLNKRDGCSSGGTFCGIRPGLCCSEFCFLWCITFID.

The N-terminal stretch at 1–22 (MKLTCVMIVAVLFLIAWTFVTA) is a signal peptide. Positions 23–49 (DDSRNGLKNLFPKARHEMKNPEASKLN) are excised as a propeptide. 3 disulfides stabilise this stretch: C54–C69, C61–C73, and C68–C77. P65 is modified (4-hydroxyproline).

Belongs to the conotoxin O1 superfamily. As to expression, expressed by the venom duct.

It is found in the secreted. Its function is as follows. Delta-conotoxins bind to site 6 of voltage-gated sodium channels (Nav) and inhibit the inactivation process. The protein is Delta-conotoxin-like SmVIA of Conus stercusmuscarum (Fly-specked cone).